We begin with the raw amino-acid sequence, 146 residues long: ATP synthase epsilon chain (146 aa).

The protein belongs to the ATPase epsilon chain family. As to quaternary structure, F-type ATPases have 2 components, CF(1) - the catalytic core - and CF(0) - the membrane proton channel. CF(1) has five subunits: alpha(3), beta(3), gamma(1), delta(1), epsilon(1). CF(0) has three main subunits: a, b and c.

The protein localises to the cell inner membrane. Functionally, produces ATP from ADP in the presence of a proton gradient across the membrane. This is ATP synthase epsilon chain from Rhodospirillum centenum (strain ATCC 51521 / SW).